A 1055-amino-acid polypeptide reads, in one-letter code: Elongation factor 3 (1055 aa).

Val45 serves as a coordination point for ADP. HEAT repeat units follow at residues 48-86 (FTQI…NGAA), 96-133 (SAEN…SMNP), 134-172 (WASF…SAPF), 176-213 (EAMP…LVEN), 218-255 (KFVP…APTI), 257-290 (LIAP…LVDS), and 296-337 (PFLP…VPAE). ABC transporter domains are found at residues 447-659 (CNIE…SYYQ) and 687-1004 (LKMR…KKAA). ADP is bound by residues Asn723, Glu933, Asn936, and His962. Positions 1024 to 1055 (EKKLSAADKRKAKKDRMARRKRGEEVFSDEEL) are disordered. A compositionally biased stretch (basic residues) spans 1033–1044 (RKAKKDRMARRK).

It belongs to the ABC transporter superfamily. ABCF family. EF3 subfamily. Interacts with CCH1; the interaction is direct and required for the localization of CCH1 to the cell membrane.

It localises to the cytoplasm. Its subcellular location is the cytosol. The enzyme catalyses ATP + H2O = ADP + phosphate + H(+). It functions in the pathway protein biosynthesis; polypeptide chain elongation. Ribosome-dependent ATPase that functions in cytoplasmic translation elongation. Required for the ATP-dependent release of deacylated tRNA from the ribosomal E-site during protein biosynthesis. Stimulates the eEF1A-dependent binding of aminoacyl-tRNA to the ribosomal A-site, which has reduced affinity for tRNA as long as the E-site is occupied. Assists translation termination by stimulating the release of nascent protein from the ribosome by release factors. Appears to localize calcium-channel protein CCH1 to the plasma membrane. The chain is Elongation factor 3 from Cryptococcus neoformans var. grubii serotype A (strain H99 / ATCC 208821 / CBS 10515 / FGSC 9487) (Filobasidiella neoformans var. grubii).